A 95-amino-acid polypeptide reads, in one-letter code: Large ribosomal subunit protein bL25 (95 aa).

This sequence belongs to the bacterial ribosomal protein bL25 family. Part of the 50S ribosomal subunit; part of the 5S rRNA/L5/L18/L25 subcomplex. Contacts the 5S rRNA. Binds to the 5S rRNA independently of L5 and L18.

Functionally, this is one of the proteins that binds to the 5S RNA in the ribosome where it forms part of the central protuberance. The protein is Large ribosomal subunit protein bL25 of Shewanella oneidensis (strain ATCC 700550 / JCM 31522 / CIP 106686 / LMG 19005 / NCIMB 14063 / MR-1).